A 554-amino-acid polypeptide reads, in one-letter code: MAYYRTPHDVTALPAWQALQQHRDAMQGFSMREAFAADGKRFEEFSLSSCGLFLDYSKNLINEQTRDLLVGLANEVGLADAIKSMFSGEIINASEGRPVLHTALRRPVGDKLSVNGVNVMPDVHKVLNQITELVGRIHDGLWRGYSEKPITDVVNIGIGGSFLGPELVSEALLPYAQRGVRCHYLANIDGSEFHELSANLRAETTLFIVSSKSFNTLETLKNATAARTWYLAQGGSEAELYRHFIAVSSNKAAAVAFGMREENIFPMWDWVGGRYSLWSAIGLPIALAIGTANFKELLSGAYTMDQHFQTAPFDKNMPVLLALLGVWYGNFWGAQAHAILPYDHYLRNITKHLQQLDMESNGKSVLQDGSPVKTDTGPVIWGGVGCNGQHAYHQLLHQGTQLIPADFIVPVVSFNPVADHHQWLYANCLSQSQALMLGKTRDEAEAELRAKGMNEDDIAKLAPHKVIPGNRPSNTLVVERISPRRLGALVAMYEHKVFVQSVIWGINAFDQWGVELGKELGKGVYQRLVGSLEDSAEDGSTQGLINYFRGRHRG.

Residue Glu359 is the Proton donor of the active site. Catalysis depends on residues His390 and Lys518.

Belongs to the GPI family.

The protein resides in the cytoplasm. The enzyme catalyses alpha-D-glucose 6-phosphate = beta-D-fructose 6-phosphate. The protein operates within carbohydrate biosynthesis; gluconeogenesis. It functions in the pathway carbohydrate degradation; glycolysis; D-glyceraldehyde 3-phosphate and glycerone phosphate from D-glucose: step 2/4. Functionally, catalyzes the reversible isomerization of glucose-6-phosphate to fructose-6-phosphate. This is Glucose-6-phosphate isomerase from Pseudomonas entomophila (strain L48).